Here is a 625-residue protein sequence, read N- to C-terminus: MSQPLHARFATRAVKNPMILEKERQLTDSKYHILVAATGSVAAIKLTLIVKSLLTYKGVDVQVVLTDPARNFVEKEDLTALGVNVYNNADDWKNWDGLECPITHIELRRWAHLLLIAPLSANTMAKMANGLCDNLLTSLIRAWAPLKPILLAPAMNTLMWTNPITQEHLSAISRIYKNSEFIMPIEKVLACGDIGMGGMAEWRNIVGRVADKLQLEQKSVLPNAVKNIDGQDDDSSEQTAAFEEYDDDDDDDVDDNEQSNSMIETSANADITPKASLLPSTTESSISKDHETSQAPLGSESVDTQASENVTTKPEPPVPFTSSEYRNTEEEQYLNLIRYILENGQSRPDRTGTGTRSVFAPPQLRFSLRNNTLPLLTTKRVFLRGVLEELLWFIHGDTNANHLSEKGIHIWDGNGSREFLDSRGLTDRKVGDLGPIYGFQWRHFGAQYVDCDTDYTNKGVDQLAQVISTLKLNPYDRRIILSAWNPLAIPEMALPPCHIFCQFYVSEPCKPGGKPQLSSMMYQRSADMGLGVPFNIASYSLLTHMIAHMCGYEAAEFVHVMGDCHIYNDHLEALQTQLERVPKAFPKLFFKRDAKDIGSIDSFSVDDFAVEGYNPYGPIKMKMSV.

Positions 224 to 323 (AVKNIDGQDD…PEPPVPFTSS (100 aa)) are disordered. The span at 243–257 (EEYDDDDDDDVDDNE) shows a compositional bias: acidic residues. 2 stretches are compositionally biased toward polar residues: residues 258 to 269 (QSNSMIETSANA) and 293 to 312 (SQAP…NVTT). DUMP is bound by residues Arg350 and 477-478 (RR). The Nucleophile role is filled by Cys497. DUMP-binding positions include 524–527 (RSAD), Asn535, and 565–567 (HIY). Asp527 contributes to the (6R)-5,10-methylene-5,6,7,8-tetrahydrofolate binding site.

In the N-terminal section; belongs to the HFCD (homo-oligomeric flavin containing Cys decarboxylase) superfamily. The protein in the C-terminal section; belongs to the thymidylate synthase family.

It is found in the cytoplasm. It catalyses the reaction dUMP + (6R)-5,10-methylene-5,6,7,8-tetrahydrofolate = 7,8-dihydrofolate + dTMP. It functions in the pathway pyrimidine metabolism; dTTP biosynthesis. Its function is as follows. Required for both nuclear and mitochondrial DNA synthesis. In Schizosaccharomyces pombe (strain 972 / ATCC 24843) (Fission yeast), this protein is Probable thymidylate synthase.